Reading from the N-terminus, the 89-residue chain is Small ribosomal subunit protein uS15 (89 aa).

It belongs to the universal ribosomal protein uS15 family. Part of the 30S ribosomal subunit. Forms a bridge to the 50S subunit in the 70S ribosome, contacting the 23S rRNA.

Functionally, one of the primary rRNA binding proteins, it binds directly to 16S rRNA where it helps nucleate assembly of the platform of the 30S subunit by binding and bridging several RNA helices of the 16S rRNA. In terms of biological role, forms an intersubunit bridge (bridge B4) with the 23S rRNA of the 50S subunit in the ribosome. The chain is Small ribosomal subunit protein uS15 from Psychromonas ingrahamii (strain DSM 17664 / CCUG 51855 / 37).